We begin with the raw amino-acid sequence, 353 residues long: Photosystem II protein D1 (353 aa).

Thr2 carries the N-acetylthreonine modification. Thr2 is modified (phosphothreonine). A run of 3 helical transmembrane segments spans residues 29-46, 118-133, and 142-156; these read YIGW…TATA, HFLL…EWEL, and WIAV…AAAA. His118 lines the chlorophyll a pocket. Tyr126 contacts pheophytin a. [CaMn4O5] cluster-binding residues include Asp170 and Glu189. A helical transmembrane segment spans residues 197–218; the sequence is FHMLGVAGVFGGSLFSAMHGSL. His198 serves as a coordination point for chlorophyll a. A quinone contacts are provided by residues His215 and 264–265; that span reads SF. His215 provides a ligand contact to Fe cation. His272 lines the Fe cation pocket. A helical transmembrane segment spans residues 274–288; it reads FLAAWPVVGIWFTAL. [CaMn4O5] cluster contacts are provided by His332, Glu333, Asp342, and Ala344. Positions 345–353 are excised as a propeptide; it reads SVEAPSVNG.

The protein belongs to the reaction center PufL/M/PsbA/D family. PSII is composed of 1 copy each of membrane proteins PsbA, PsbB, PsbC, PsbD, PsbE, PsbF, PsbH, PsbI, PsbJ, PsbK, PsbL, PsbM, PsbT, PsbX, PsbY, PsbZ, Psb30/Ycf12, at least 3 peripheral proteins of the oxygen-evolving complex and a large number of cofactors. It forms dimeric complexes. The cofactor is The D1/D2 heterodimer binds P680, chlorophylls that are the primary electron donor of PSII, and subsequent electron acceptors. It shares a non-heme iron and each subunit binds pheophytin, quinone, additional chlorophylls, carotenoids and lipids. D1 provides most of the ligands for the Mn4-Ca-O5 cluster of the oxygen-evolving complex (OEC). There is also a Cl(-1) ion associated with D1 and D2, which is required for oxygen evolution. The PSII complex binds additional chlorophylls, carotenoids and specific lipids.. Tyr-161 forms a radical intermediate that is referred to as redox-active TyrZ, YZ or Y-Z. In terms of processing, C-terminally processed by CTPA; processing is essential to allow assembly of the oxygen-evolving complex and thus photosynthetic growth.

The protein resides in the plastid. Its subcellular location is the chloroplast thylakoid membrane. The catalysed reaction is 2 a plastoquinone + 4 hnu + 2 H2O = 2 a plastoquinol + O2. In terms of biological role, photosystem II (PSII) is a light-driven water:plastoquinone oxidoreductase that uses light energy to abstract electrons from H(2)O, generating O(2) and a proton gradient subsequently used for ATP formation. It consists of a core antenna complex that captures photons, and an electron transfer chain that converts photonic excitation into a charge separation. The D1/D2 (PsbA/PsbD) reaction center heterodimer binds P680, the primary electron donor of PSII as well as several subsequent electron acceptors. The sequence is that of Photosystem II protein D1 from Huperzia lucidula (Shining clubmoss).